The following is a 378-amino-acid chain: UPF0754 membrane protein BCG9842_B4423 (378 aa).

Residues 357–377 (YLGALLGGIIGLVQGLLLLFL) form a helical membrane-spanning segment.

This sequence belongs to the UPF0754 family.

The protein resides in the cell membrane. The sequence is that of UPF0754 membrane protein BCG9842_B4423 from Bacillus cereus (strain G9842).